Consider the following 449-residue polypeptide: Biotin carboxylase (449 aa).

The Biotin carboxylation domain occupies 1–445; it reads MLDKIVIANR…NIHYLEKKLG (445 aa). Residues Lys-116, Lys-159, 165–166, 201–204, His-209, and His-236 each bind ATP; these read GG and EKYL. Positions 120-317 constitute an ATP-grasp domain; the sequence is IAAMKKAGVP…LIKEQLRIAA (198 aa). A hydrogencarbonate-binding site is contributed by Lys-238. ATP-binding residues include Glu-276 and Glu-288. Glu-276, Glu-288, and Asn-290 together coordinate Mg(2+). Glu-276, Glu-288, and Asn-290 together coordinate Mn(2+). Hydrogencarbonate contacts are provided by Arg-292, Val-295, and Arg-338. The active site involves Arg-292. Arg-338 is a biotin binding site.

Acetyl-CoA carboxylase is a heterohexamer of biotin carboxyl carrier protein, biotin carboxylase and the two subunits of carboxyl transferase in a 2:2 complex. Mg(2+) serves as cofactor. Requires Mn(2+) as cofactor.

It catalyses the reaction N(6)-biotinyl-L-lysyl-[protein] + hydrogencarbonate + ATP = N(6)-carboxybiotinyl-L-lysyl-[protein] + ADP + phosphate + H(+). Its pathway is lipid metabolism; malonyl-CoA biosynthesis; malonyl-CoA from acetyl-CoA: step 1/1. In terms of biological role, this protein is a component of the acetyl coenzyme A carboxylase complex; first, biotin carboxylase catalyzes the carboxylation of the carrier protein and then the transcarboxylase transfers the carboxyl group to form malonyl-CoA. The sequence is that of Biotin carboxylase (accC) from Escherichia coli O157:H7.